Consider the following 137-residue polypeptide: Cell division protein SepF (137 aa).

This sequence belongs to the SepF family. As to quaternary structure, homodimer. Interacts with FtsZ.

The protein localises to the cytoplasm. Cell division protein that is part of the divisome complex and is recruited early to the Z-ring. Probably stimulates Z-ring formation, perhaps through the cross-linking of FtsZ protofilaments. Its function overlaps with FtsA. In Carboxydothermus hydrogenoformans (strain ATCC BAA-161 / DSM 6008 / Z-2901), this protein is Cell division protein SepF.